Reading from the N-terminus, the 256-residue chain is Imidazole glycerol phosphate synthase subunit HisF (256 aa).

Residues D11 and D130 contribute to the active site.

The protein belongs to the HisA/HisF family. As to quaternary structure, heterodimer of HisH and HisF.

The protein resides in the cytoplasm. It carries out the reaction 5-[(5-phospho-1-deoxy-D-ribulos-1-ylimino)methylamino]-1-(5-phospho-beta-D-ribosyl)imidazole-4-carboxamide + L-glutamine = D-erythro-1-(imidazol-4-yl)glycerol 3-phosphate + 5-amino-1-(5-phospho-beta-D-ribosyl)imidazole-4-carboxamide + L-glutamate + H(+). It participates in amino-acid biosynthesis; L-histidine biosynthesis; L-histidine from 5-phospho-alpha-D-ribose 1-diphosphate: step 5/9. Its function is as follows. IGPS catalyzes the conversion of PRFAR and glutamine to IGP, AICAR and glutamate. The HisF subunit catalyzes the cyclization activity that produces IGP and AICAR from PRFAR using the ammonia provided by the HisH subunit. In Prochlorococcus marinus (strain MIT 9215), this protein is Imidazole glycerol phosphate synthase subunit HisF.